We begin with the raw amino-acid sequence, 120 residues long: Neuromedin-B (120 aa).

The N-terminal stretch at 1–29 is a signal peptide; the sequence is MSAVPLTRMLPLRFLTHLLLLSFIPLYFC. The propeptide occupies 30-44; that stretch reads MEFSEDARNIEKIRR. The residue at position 54 (methionine 54) is a Methionine amide. Residues 58–120 constitute a propeptide that is removed on maturation; that stretch reads SLQDTYNPSE…MDDYIKTTQK (63 aa).

The protein belongs to the bombesin/neuromedin-B/ranatensin family. In terms of tissue distribution, brain, intestine, and ovaries and early embryos (stages 2 and 10).

The protein localises to the secreted. In terms of biological role, stimulates smooth muscle contraction. This is Neuromedin-B (nmb) from Xenopus laevis (African clawed frog).